Reading from the N-terminus, the 307-residue chain is uncharacterized protein (307 aa).

The protein to B.burgdorferi BB0340.

This is an uncharacterized protein from Treponema pallidum (strain Nichols).